The sequence spans 548 residues: Chaperonin GroEL (548 aa).

ATP is bound by residues 30-33 (TLGP), K51, 87-91 (DGTTT), G415, 479-481 (NAA), and D495.

Belongs to the chaperonin (HSP60) family. In terms of assembly, forms a cylinder of 14 subunits composed of two heptameric rings stacked back-to-back. Interacts with the co-chaperonin GroES.

The protein resides in the cytoplasm. The catalysed reaction is ATP + H2O + a folded polypeptide = ADP + phosphate + an unfolded polypeptide.. In terms of biological role, together with its co-chaperonin GroES, plays an essential role in assisting protein folding. The GroEL-GroES system forms a nano-cage that allows encapsulation of the non-native substrate proteins and provides a physical environment optimized to promote and accelerate protein folding. The sequence is that of Chaperonin GroEL from Klebsiella pneumoniae subsp. pneumoniae (strain ATCC 700721 / MGH 78578).